The chain runs to 354 residues: Probable cinnamyl alcohol dehydrogenase 1 (354 aa).

Cys47 contributes to the Zn(2+) binding site. Residue Ser49 coordinates NADP(+). Residues His69, Glu70, Cys100, Cys103, Cys106, Cys114, and Cys163 each contribute to the Zn(2+) site. Residues Thr167, 188–193, 211–216, Thr251, Gly275, and 296–298 each bind NADP(+); these read GLGGVG, SSSDKK, and SFI.

It belongs to the zinc-containing alcohol dehydrogenase family. In terms of assembly, homodimer. Requires Zn(2+) as cofactor.

It carries out the reaction (E)-cinnamyl alcohol + NADP(+) = (E)-cinnamaldehyde + NADPH + H(+). The enzyme catalyses (E)-coniferol + NADP(+) = (E)-coniferaldehyde + NADPH + H(+). The catalysed reaction is (E)-sinapyl alcohol + NADP(+) = (E)-sinapaldehyde + NADPH + H(+). It catalyses the reaction (E)-4-coumaroyl alcohol + NADP(+) = (E)-4-coumaraldehyde + NADPH + H(+). It carries out the reaction (E)-caffeyl alcohol + NADP(+) = (E)-caffeyl aldehyde + NADPH + H(+). The protein operates within aromatic compound metabolism; phenylpropanoid biosynthesis. Involved in lignin biosynthesis. Catalyzes the final step specific for the production of lignin monomers. Catalyzes the NADPH-dependent reduction of coniferaldehyde, 5-hydroxyconiferaldehyde, sinapaldehyde, 4-coumaraldehyde and caffeyl aldehyde to their respective alcohols. The sequence is that of Probable cinnamyl alcohol dehydrogenase 1 (CAD1) from Eucalyptus gunnii (Cider gum).